We begin with the raw amino-acid sequence, 94 residues long: Selenoprotein K (94 aa).

The chain crosses the membrane as a helical span at residues 20–42; it reads VSFLTDFFWGIAEFVVFFFKTLL. The disordered stretch occupies residues 46 to 94; the sequence is VKKRRGYGSSSDSRYDDGRGPPGNPPRRMGRISHLRGPSPPPMAGGUGR. Position 92 (Sec-92) is a non-standard amino acid, selenocysteine.

It belongs to the selenoprotein K family. In terms of assembly, interacts with DERL1, DERL2, DERL3 and SELENOS. The SELENOK-SELENOS complex interacts with VCP. Interacts with ZDHHC6. Post-translationally, cleaved by CAPN2/m-calpain in resting macrophages but not in activated macrophages. Macrophage activation up-regulates expression of the calpain inhibitor CAST/calpastatin, resulting in inhibition of CAPN2 activity. Truncated SELENOK proteins produced by failed UGA/Sec decoding are ubiquitinated by the CRL2(KLHDC2) complex, which recognizes the diglycine (Gly-Gly) at the C-terminus of truncated SELENOK proteins. As to expression, high expression in spleen and intestine (at protein level). Expressed in a range of immune cells including T and B-cells and also in myeloid cells including macrophages, neutrophils and dendritic cells (at protein level).

It is found in the endoplasmic reticulum membrane. The protein resides in the cell membrane. Its function is as follows. Required for Ca(2+) flux in immune cells and plays a role in T-cell proliferation and in T-cell and neutrophil migration. Involved in endoplasmic reticulum-associated degradation (ERAD) of soluble glycosylated proteins. Required for palmitoylation and cell surface expression of CD36 and involved in macrophage uptake of low-density lipoprotein and in foam cell formation. Together with ZDHHC6, required for palmitoylation of ITPR1 in immune cells, leading to regulate ITPR1 stability and function. Plays a role in protection of cells from ER stress-induced apoptosis. Protects cells from oxidative stress when overexpressed in cardiomyocytes. The sequence is that of Selenoprotein K from Mus musculus (Mouse).